Consider the following 2345-residue polypeptide: Acetyl-CoA carboxylase 1 (2345 aa).

Residue Met1 is modified to N-acetylmethionine. Ser5, Ser23, Ser25, Ser29, Ser34, Ser47, Ser49, and Ser52 each carry phosphoserine. Thr57 bears the Phosphothreonine mark. Ser77 carries the phosphoserine modification. Ser79 carries the post-translational modification Phosphoserine; by AMPK. Positions 116 to 617 constitute a Biotin carboxylation domain; sequence VIEKVLIANN…DTGWLDRLIA (502 aa). In terms of domain architecture, ATP-grasp spans 274–465; that stretch reads SKRILNVPQD…LPAAQLQIAM (192 aa). 314–319 is a binding site for ATP; it reads GGGGKG. 3 residues coordinate Mg(2+): Glu423, Glu436, and Asn438. Residues Glu423, Glu436, and Asn438 each contribute to the Mn(2+) site. Arg440 is an active-site residue. Position 609 is a phosphothreonine (Thr609). Residues 744 to 818 form the Biotinyl-binding domain; sequence FEKENDPSVM…DPGCVIAKMQ (75 aa). Lys785 bears the N6-biotinyllysine mark. Ser834 is subject to Phosphoserine. Ser1200 and Ser1215 each carry phosphoserine; by AMPK; in vitro. Ser1217 bears the Phosphoserine mark. Position 1226 is a phosphothreonine (Thr1226). 3 positions are modified to phosphoserine: Ser1258, Ser1262, and Ser1272. Residue Lys1333 is modified to N6-acetyllysine. Residues 1575-1913 form the CoA carboxyltransferase N-terminal domain; that stretch reads PYVTKDLLQS…NVHSSVPLLN (339 aa). The tract at residues 1575–2233 is carboxyltransferase; it reads PYVTKDLLQS…EDLVKKKIHS (659 aa). 3 residues coordinate CoA: Arg1822, Lys2126, and Arg2128. Residues 1917-2233 form the CoA carboxyltransferase C-terminal domain; it reads PIDRIIEFVP…EDLVKKKIHS (317 aa). Thr2152 carries the post-translational modification Phosphothreonine.

As to quaternary structure, monomer, homodimer, and homotetramer. Can form filamentous polymers. Interacts in its inactive phosphorylated form with the BRCT domains of BRCA1 which prevents ACACA dephosphorylation and inhibits lipid synthesis. Interacts with MID1IP1; interaction with MID1IP1 promotes oligomerization and increases its activity. Mg(2+) is required as a cofactor. Requires Mn(2+) as cofactor. The cofactor is biotin. Post-translationally, the N-terminus is blocked. In terms of processing, phosphorylation on Ser-1262 is required for interaction with BRCA1. Phosphorylation at Ser-79 by AMPK inactivates enzyme activity. Phosphorylated in vitro at Ser-1200 and Ser-1215 by AMPK; the relevance of phosphorylation of these sites in vivo is however unclear. Post-translationally, the biotin cofactor is covalently attached to the central biotinyl-binding domain and is required for the catalytic activity.

It localises to the cytoplasm. It is found in the cytosol. It catalyses the reaction hydrogencarbonate + acetyl-CoA + ATP = malonyl-CoA + ADP + phosphate + H(+). It functions in the pathway lipid metabolism; malonyl-CoA biosynthesis; malonyl-CoA from acetyl-CoA: step 1/1. Its activity is regulated as follows. Inhibited by phosphorylation. Citrate promotes oligomerization of the protein into filaments that correspond to the most active form of the carboxylase. Cytosolic enzyme that catalyzes the carboxylation of acetyl-CoA to malonyl-CoA, the first and rate-limiting step of de novo fatty acid biosynthesis. This is a 2 steps reaction starting with the ATP-dependent carboxylation of the biotin carried by the biotin carboxyl carrier (BCC) domain followed by the transfer of the carboxyl group from carboxylated biotin to acetyl-CoA. The protein is Acetyl-CoA carboxylase 1 of Rattus norvegicus (Rat).